Here is a 346-residue protein sequence, read N- to C-terminus: Leucine zipper protein 2 (346 aa).

The N-terminal stretch at 1-19 (MKFSPAHYLLPLLPALVLS) is a signal peptide. Positions 16 to 211 (LVLSTRQDYE…QMKAMKETVQ (196 aa)) form a coiled coil. An N-linked (GlcNAc...) asparagine glycan is attached at Asn-133. Residues 164–192 (LRYGKKDLLFKAQQLTDLEQKLAVAKNEL) are leucine-zipper. Disordered stretches follow at residues 221 to 240 (QPPP…LLPP) and 248 to 346 (PDAA…EKIL). A compositionally biased stretch (low complexity) spans 250 to 261 (AAAKSKPQQSAS). A compositionally biased stretch (polar residues) spans 262–283 (GNNESSQVESTKEGNPSTTACD). Asn-264 carries N-linked (GlcNAc...) asparagine glycosylation. Residues 286-298 (DEGRPCSMKHKES) are compositionally biased toward basic and acidic residues. Asn-302 carries an N-linked (GlcNAc...) asparagine glycan.

The protein localises to the secreted. This is Leucine zipper protein 2 (LUZP2) from Homo sapiens (Human).